Here is an 846-residue protein sequence, read N- to C-terminus: Major vault protein beta (846 aa).

Position 2 is an N-acetylalanine (Ala-2). 9 MVP repeats span residues 2 to 60 (ATPV…IPPR), 61 to 115 (QYCI…QPVP), 116 to 172 (LQVI…EPVR), 173 to 225 (AVII…GFIQ), 226 to 280 (ALVL…RDIK), 281 to 332 (AITL…IQNV), 333 to 388 (NVLS…RRKR), 389 to 458 (IPLD…STKV), and 459 to 521 (ITYR…FLGP).

As to quaternary structure, the vault ribonucleoprotein particle is a huge (400 A x 670 A) cage structure of 12.9 MDa. It consists of a dimer of half-vaults, with each half-vault comprising 39 identical major vault protein (MVP) chains. Dictyostelium is one of the few organisms in which the major component is actually two proteins (alpha and beta).

The protein resides in the cytoplasm. The protein localises to the nucleus. Functionally, unknown, though MVP-beta is required for normal vault structure. This Dictyostelium discoideum (Social amoeba) protein is Major vault protein beta (mvpB).